We begin with the raw amino-acid sequence, 232 residues long: RNA chaperone ProQ (232 aa).

The tract at residues Glu105–Asp182 is disordered. Positions Gln117 to Arg136 are enriched in basic and acidic residues. Residues Arg137–Pro146 are compositionally biased toward basic residues. Basic and acidic residues predominate over residues Arg147 to His177.

The protein belongs to the ProQ family.

Its subcellular location is the cytoplasm. RNA chaperone with significant RNA binding, RNA strand exchange and RNA duplexing activities. May regulate ProP activity through an RNA-based, post-transcriptional mechanism. This is RNA chaperone ProQ from Shigella flexneri serotype 5b (strain 8401).